We begin with the raw amino-acid sequence, 468 residues long: Phosphoglucosamine mutase (468 aa).

S112 acts as the Phosphoserine intermediate in catalysis. Mg(2+) is bound by residues S112, D254, D256, and D258. At S112 the chain carries Phosphoserine.

The protein belongs to the phosphohexose mutase family. The cofactor is Mg(2+). In terms of processing, activated by phosphorylation.

It carries out the reaction alpha-D-glucosamine 1-phosphate = D-glucosamine 6-phosphate. Functionally, catalyzes the conversion of glucosamine-6-phosphate to glucosamine-1-phosphate. The polypeptide is Phosphoglucosamine mutase (Prochlorococcus marinus (strain MIT 9303)).